The chain runs to 619 residues: Leucine aminopeptidase 2 (619 aa).

A peptide is bound by residues Q141 to Q143 and P273 to E278. H302 provides a ligand contact to Zn(2+). E303 functions as the Proton acceptor in the catalytic mechanism. H306 and E325 together coordinate Zn(2+). The active-site Proton donor is Y390.

The protein belongs to the peptidase M1 family. It depends on Zn(2+) as a cofactor.

The protein localises to the cytoplasm. It is found in the nucleus. The enzyme catalyses an epoxide + H2O = an ethanediol. Aminopeptidase that preferentially cleaves di- and tripeptides. Also has low epoxide hydrolase activity (in vitro). Can hydrolyze the epoxide leukotriene LTA(4) but it forms preferentially 5,6-dihydroxy-7,9,11,14-eicosatetraenoic acid rather than the cytokine leukotriene B(4) as the product compared to the homologous mammalian enzyme (in vitro). The sequence is that of Leucine aminopeptidase 2 from Coccidioides immitis (strain RS) (Valley fever fungus).